The following is a 319-amino-acid chain: Acetyl-coenzyme A carboxylase carboxyl transferase subunit alpha (319 aa).

The region spanning 38 to 292 (ALDKKAETLL…GKAIEMMLKE (255 aa)) is the CoA carboxyltransferase C-terminal domain.

The protein belongs to the AccA family. Acetyl-CoA carboxylase is a heterohexamer composed of biotin carboxyl carrier protein (AccB), biotin carboxylase (AccC) and two subunits each of ACCase subunit alpha (AccA) and ACCase subunit beta (AccD).

It is found in the cytoplasm. The enzyme catalyses N(6)-carboxybiotinyl-L-lysyl-[protein] + acetyl-CoA = N(6)-biotinyl-L-lysyl-[protein] + malonyl-CoA. The protein operates within lipid metabolism; malonyl-CoA biosynthesis; malonyl-CoA from acetyl-CoA: step 1/1. Component of the acetyl coenzyme A carboxylase (ACC) complex. First, biotin carboxylase catalyzes the carboxylation of biotin on its carrier protein (BCCP) and then the CO(2) group is transferred by the carboxyltransferase to acetyl-CoA to form malonyl-CoA. The protein is Acetyl-coenzyme A carboxylase carboxyl transferase subunit alpha of Cereibacter sphaeroides (strain ATCC 17029 / ATH 2.4.9) (Rhodobacter sphaeroides).